Consider the following 587-residue polypeptide: 5-aminolevulinate synthase, erythroid-specific, mitochondrial (587 aa).

A mitochondrion-targeting transit peptide spans 1–49 (MVTAAMLLQCCPVLARGPTSLLGKVVKTHQFLFGIGRCPILATQGPNCS). Arginine 163 is a binding site for succinyl-CoA. Residues cysteine 258 and phenylalanine 259 each coordinate pyridoxal 5'-phosphate. Residues serine 280 and lysine 299 each coordinate succinyl-CoA. Pyridoxal 5'-phosphate contacts are provided by serine 332, histidine 360, and threonine 388. The active site involves lysine 391. An N6-(pyridoxal phosphate)lysine modification is found at lysine 391. Threonine 420 and threonine 421 together coordinate pyridoxal 5'-phosphate. Threonine 508 provides a ligand contact to succinyl-CoA.

The protein belongs to the class-II pyridoxal-phosphate-dependent aminotransferase family. In terms of assembly, homodimer. Interacts with SUCLA2. Interacts with SUCLA2. Pyridoxal 5'-phosphate is required as a cofactor. Erythroid-specific.

It is found in the mitochondrion inner membrane. It carries out the reaction succinyl-CoA + glycine + H(+) = 5-aminolevulinate + CO2 + CoA. The protein operates within porphyrin-containing compound metabolism; protoporphyrin-IX biosynthesis; 5-aminolevulinate from glycine: step 1/1. Its activity is regulated as follows. Down-regulated by itaconyl-CoA which acts as a competitive inhibitor of succinyl-CoA substrate. Catalyzes the pyridoxal 5'-phosphate (PLP)-dependent condensation of succinyl-CoA and glycine to form aminolevulinic acid (ALA), with CoA and CO2 as by-products. Contributes significantly to heme formation during erythropoiesis. Its function is as follows. Catalyzes the pyridoxal 5'-phosphate (PLP)-dependent condensation of succinyl-CoA and glycine to form aminolevulinic acid (ALA), with CoA and CO2 as by-products. Catalytic activity is 75-85% of isoform 1 activity. Functionally, catalyzes the pyridoxal 5'-phosphate (PLP)-dependent condensation of succinyl-CoA and glycine to form aminolevulinic acid (ALA), with CoA and CO2 as by-products. Catalytic activity is 65-75% of isoform 1 activity. The sequence is that of 5-aminolevulinate synthase, erythroid-specific, mitochondrial from Homo sapiens (Human).